Here is a 257-residue protein sequence, read N- to C-terminus: Homeobox protein EMX1 (257 aa).

Residues 159-218 constitute a DNA-binding region (homeobox); sequence PKRIRTAFSPSQLLRLERAFEKNHYVVGAERKQLAGSLSLSETQVKVWFQNRRTKYKRQK. Residues 216–257 form a disordered region; sequence RQKLEEEGPESEQKKKGSHHINRWRIATKQANGEDIDVTSND. Positions 217–230 are enriched in basic and acidic residues; it reads QKLEEEGPESEQKK.

This sequence belongs to the EMX homeobox family. Interacts with WRD11 (via the N-terminal and the central portion of the protein); the interaction associates EMX1 with GLI3. Cerebral cortex. Expressed in the olfactory bulbs.

The protein localises to the nucleus. In terms of biological role, transcription factor, which in cooperation with EMX2, acts to generate the boundary between the roof and archipallium in the developing brain. May function in combinations with OTX1/2 to specify cell fates in the developing central nervous system. The chain is Homeobox protein EMX1 (Emx1) from Mus musculus (Mouse).